Here is a 206-residue protein sequence, read N- to C-terminus: Cytochrome c biogenesis ATP-binding export protein CcmA (206 aa).

Positions leucine 4–leucine 205 constitute an ABC transporter domain. An ATP-binding site is contributed by glycine 36 to threonine 43.

Belongs to the ABC transporter superfamily. CcmA exporter (TC 3.A.1.107) family. In terms of assembly, the complex is composed of two ATP-binding proteins (CcmA) and two transmembrane proteins (CcmB).

It localises to the cell inner membrane. The catalysed reaction is heme b(in) + ATP + H2O = heme b(out) + ADP + phosphate + H(+). In terms of biological role, part of the ABC transporter complex CcmAB involved in the biogenesis of c-type cytochromes; once thought to export heme, this seems not to be the case, but its exact role is uncertain. Responsible for energy coupling to the transport system. The protein is Cytochrome c biogenesis ATP-binding export protein CcmA of Nitrosospira multiformis (strain ATCC 25196 / NCIMB 11849 / C 71).